Here is a 391-residue protein sequence, read N- to C-terminus: Succinyl-diaminopimelate desuccinylase (391 aa).

His-67 contributes to the Zn(2+) binding site. Residue Asp-69 is part of the active site. Asp-101 is a Zn(2+) binding site. The active-site Proton acceptor is Glu-135. Zn(2+) is bound by residues Glu-136, Glu-164, and His-353.

The protein belongs to the peptidase M20A family. DapE subfamily. In terms of assembly, homodimer. The cofactor is Zn(2+). Co(2+) is required as a cofactor.

It carries out the reaction N-succinyl-(2S,6S)-2,6-diaminopimelate + H2O = (2S,6S)-2,6-diaminopimelate + succinate. Its pathway is amino-acid biosynthesis; L-lysine biosynthesis via DAP pathway; LL-2,6-diaminopimelate from (S)-tetrahydrodipicolinate (succinylase route): step 3/3. Catalyzes the hydrolysis of N-succinyl-L,L-diaminopimelic acid (SDAP), forming succinate and LL-2,6-diaminopimelate (DAP), an intermediate involved in the bacterial biosynthesis of lysine and meso-diaminopimelic acid, an essential component of bacterial cell walls. The sequence is that of Succinyl-diaminopimelate desuccinylase from Rickettsia bellii (strain RML369-C).